The following is a 215-amino-acid chain: uncharacterized protein (215 aa).

This is an uncharacterized protein from Methanocaldococcus jannaschii (strain ATCC 43067 / DSM 2661 / JAL-1 / JCM 10045 / NBRC 100440) (Methanococcus jannaschii).